The chain runs to 429 residues: tRNA(Ile2) 2-agmatinylcytidine synthetase TiaS (429 aa).

The tract at residues 403–429 is disordered; the sequence is KPPERPLHPSKSLEPPSTPIHSDTISL.

It belongs to the TiaS family.

It is found in the cytoplasm. It catalyses the reaction cytidine(34) in tRNA(Ile2) + agmatine + ATP + H2O = 2-agmatinylcytidine(34) in tRNA(Ile2) + AMP + 2 phosphate + 2 H(+). Functionally, ATP-dependent agmatine transferase that catalyzes the formation of 2-agmatinylcytidine (agm2C) at the wobble position (C34) of tRNA(Ile2), converting the codon specificity from AUG to AUA. The polypeptide is tRNA(Ile2) 2-agmatinylcytidine synthetase TiaS (Hyperthermus butylicus (strain DSM 5456 / JCM 9403 / PLM1-5)).